A 212-amino-acid polypeptide reads, in one-letter code: Casparian strip membrane protein 1 (212 aa).

The disordered stretch occupies residues 1–28 (MDSSNSTKETGDIPIPVTSSKSSKAAPP). Over 1-49 (MDSSNSTKETGDIPIPVTSSKSSKAAPPPVVAAKAKSTTKQPLVSGWKR) the chain is Cytoplasmic. Residues 16 to 28 (PVTSSKSSKAAPP) show a composition bias toward low complexity. The chain crosses the membrane as a helical span at residues 50 to 70 (GLGIIDFILRICAIAAALAAA). Residues 71 to 100 (TAMGTTSQQLPFFTQFFQFKADYNDLPAFT) lie on the Extracellular side of the membrane. Residues 101–121 (FFVIANAMAGAYLVLSLPFSI) traverse the membrane as a helical segment. The Cytoplasmic portion of the chain corresponds to 122–133 (LCIVRPHILGAR). The chain crosses the membrane as a helical span at residues 134–154 (LMLLVFDTVAVPLVTAAASAA). Residues 155–186 (ASIVYLAHNGNSDANWVAICRQFNDFCQRVSG) are Extracellular-facing. The chain crosses the membrane as a helical span at residues 187–207 (AVVASFITALLFVVLVAVSAV). The Cytoplasmic segment spans residues 208 to 212 (ALRQK).

It belongs to the Casparian strip membrane proteins (CASP) family. Homodimer and heterodimers.

The protein localises to the cell membrane. In terms of biological role, regulates membrane-cell wall junctions and localized cell wall deposition. Required for establishment of the Casparian strip membrane domain (CSD) and the subsequent formation of Casparian strips, a cell wall modification of the root endodermis that determines an apoplastic barrier between the intraorganismal apoplasm and the extraorganismal apoplasm and prevents lateral diffusion. In Helianthus annuus (Common sunflower), this protein is Casparian strip membrane protein 1.